Here is a 548-residue protein sequence, read N- to C-terminus: Probable aquaglyceroporin-4 (548 aa).

The span at Met1–Gly22 shows a compositional bias: polar residues. Disordered stretches follow at residues Met1–Thr63, Ser76–His101, and Lys158–Asp270. Residues Met1–Pro290 are Cytoplasmic-facing. A compositionally biased stretch (basic and acidic residues) spans Pro38 to Lys48. Composition is skewed to polar residues over residues Arg77–Ser97 and Ser171–Thr200. The span at Pro249–Cys265 shows a compositional bias: basic and acidic residues. The chain crosses the membrane as a helical span at residues Leu291–Val311. Asn312 carries an N-linked (GlcNAc...) asparagine glycan. Residues Asn312 to Ser327 lie on the Extracellular side of the membrane. The chain crosses the membrane as a helical span at residues Cys328–Ala348. Residues His349–Cys369 are Cytoplasmic-facing. The NPA 1 motif lies at Asn351 to Ala353. A helical membrane pass occupies residues Val370–Met390. The Extracellular segment spans residues Tyr391–Lys420. A helical transmembrane segment spans residues Ser421–Gly441. At Asp442 to Pro448 the chain is on the cytoplasmic side. Residues Gly449 to Gly469 traverse the membrane as a helical segment. Topologically, residues Tyr470–Pro508 are extracellular. The NPA 2 signature appears at Asn477–Ala479. Residues Trp509–Val529 traverse the membrane as a helical segment. The Cytoplasmic portion of the chain corresponds to Gly530–Asn548.

This sequence belongs to the MIP/aquaporin (TC 1.A.8) family.

The protein resides in the membrane. The catalysed reaction is H2O(in) = H2O(out). It carries out the reaction glycerol(in) = glycerol(out). Functionally, probable water/glycerol channel that may have redundant functions with FgAQP2. This chain is Probable aquaglyceroporin-4, found in Gibberella zeae (strain ATCC MYA-4620 / CBS 123657 / FGSC 9075 / NRRL 31084 / PH-1) (Wheat head blight fungus).